A 363-amino-acid chain; its full sequence is Anhydro-N-acetylmuramic acid kinase (363 aa).

9 to 16 is a binding site for ATP; the sequence is GTSLDGID.

It belongs to the anhydro-N-acetylmuramic acid kinase family.

The catalysed reaction is 1,6-anhydro-N-acetyl-beta-muramate + ATP + H2O = N-acetyl-D-muramate 6-phosphate + ADP + H(+). It functions in the pathway amino-sugar metabolism; 1,6-anhydro-N-acetylmuramate degradation. The protein operates within cell wall biogenesis; peptidoglycan recycling. Its function is as follows. Catalyzes the specific phosphorylation of 1,6-anhydro-N-acetylmuramic acid (anhMurNAc) with the simultaneous cleavage of the 1,6-anhydro ring, generating MurNAc-6-P. Is required for the utilization of anhMurNAc either imported from the medium or derived from its own cell wall murein, and thus plays a role in cell wall recycling. The chain is Anhydro-N-acetylmuramic acid kinase from Nitrosomonas europaea (strain ATCC 19718 / CIP 103999 / KCTC 2705 / NBRC 14298).